A 607-amino-acid chain; its full sequence is Phosphatidylinositol 4-kinase LSB6 (607 aa).

Polar residues predominate over residues 73–88 (NVPSESPRPDQTSGSN). The interval 73 to 93 (NVPSESPRPDQTSGSNPAVGL) is disordered. A PI3K/PI4K catalytic domain is found at 161–522 (GRELERIQTG…LVRRTRCQVI (362 aa)). A G-loop region spans residues 167-173 (IQTGSSG). The segment at 318 to 356 (KSSGEDINHKPETTRNLTDETEPSKQINSSPISTESEEN) is disordered. Residues 319-330 (SSGEDINHKPET) are compositionally biased toward basic and acidic residues. Polar residues predominate over residues 341–351 (SKQINSSPIST). Positions 384-392 (RNTDRGLDN) are catalytic loop. The activation loop stretch occupies residues 411-431 (AIDNGLSFPWKHPDEWRLYPY).

It belongs to the PI3/PI4-kinase family. As to quaternary structure, interacts with LAS17. It depends on Mg(2+) as a cofactor. Mn(2+) serves as cofactor.

The protein resides in the cell membrane. It localises to the vacuole membrane. It carries out the reaction a 1,2-diacyl-sn-glycero-3-phospho-(1D-myo-inositol) + ATP = a 1,2-diacyl-sn-glycero-3-phospho-(1D-myo-inositol 4-phosphate) + ADP + H(+). In terms of biological role, may play a role in endocytic and/or exocytic pathways. This chain is Phosphatidylinositol 4-kinase LSB6 (LSB6), found in Saccharomyces cerevisiae (strain ATCC 204508 / S288c) (Baker's yeast).